We begin with the raw amino-acid sequence, 441 residues long: Glutamate--tRNA ligase 1 (441 aa).

The 'HIGH' region signature appears at 8–18 (PSPTGHIHVGN). The 'KMSKS' region motif lies at 239–243 (ELSKR). Residue Lys-242 coordinates ATP.

This sequence belongs to the class-I aminoacyl-tRNA synthetase family. Glutamate--tRNA ligase type 1 subfamily. Monomer.

The protein resides in the cytoplasm. The catalysed reaction is tRNA(Glu) + L-glutamate + ATP = L-glutamyl-tRNA(Glu) + AMP + diphosphate. Catalyzes the attachment of glutamate to tRNA(Glu) in a two-step reaction: glutamate is first activated by ATP to form Glu-AMP and then transferred to the acceptor end of tRNA(Glu). The sequence is that of Glutamate--tRNA ligase 1 from Paracoccus denitrificans (strain Pd 1222).